The primary structure comprises 113 residues: Ribulose bisphosphate carboxylase small subunit (113 aa).

The protein belongs to the RuBisCO small chain family. In terms of assembly, heterohexadecamer of 8 large and 8 small subunits. Forms a CsoS2-CsoS1-RuBisCO complex.

The protein localises to the carboxysome. RuBisCO catalyzes two reactions: the carboxylation of D-ribulose 1,5-bisphosphate, the primary event in carbon dioxide fixation, as well as the oxidative fragmentation of the pentose substrate in the photorespiration process. Both reactions occur simultaneously and in competition at the same active site. Although the small subunit is not catalytic it is essential for maximal activity. In Prochlorococcus marinus (strain MIT 9313), this protein is Ribulose bisphosphate carboxylase small subunit.